A 258-amino-acid chain; its full sequence is Leucyl/phenylalanyl-tRNA--protein transferase (258 aa).

This sequence belongs to the L/F-transferase family.

It localises to the cytoplasm. It carries out the reaction N-terminal L-lysyl-[protein] + L-leucyl-tRNA(Leu) = N-terminal L-leucyl-L-lysyl-[protein] + tRNA(Leu) + H(+). The enzyme catalyses N-terminal L-arginyl-[protein] + L-leucyl-tRNA(Leu) = N-terminal L-leucyl-L-arginyl-[protein] + tRNA(Leu) + H(+). It catalyses the reaction L-phenylalanyl-tRNA(Phe) + an N-terminal L-alpha-aminoacyl-[protein] = an N-terminal L-phenylalanyl-L-alpha-aminoacyl-[protein] + tRNA(Phe). Functionally, functions in the N-end rule pathway of protein degradation where it conjugates Leu, Phe and, less efficiently, Met from aminoacyl-tRNAs to the N-termini of proteins containing an N-terminal arginine or lysine. The polypeptide is Leucyl/phenylalanyl-tRNA--protein transferase (Alkalilimnicola ehrlichii (strain ATCC BAA-1101 / DSM 17681 / MLHE-1)).